The primary structure comprises 177 residues: Shikimate kinase (177 aa).

14-19 (GSGKST) lines the ATP pocket. S18 is a binding site for Mg(2+). The substrate site is built by D36, R60, and G82. R120 is an ATP binding site. R139 provides a ligand contact to substrate.

It belongs to the shikimate kinase family. Monomer. The cofactor is Mg(2+).

The protein localises to the cytoplasm. It carries out the reaction shikimate + ATP = 3-phosphoshikimate + ADP + H(+). The protein operates within metabolic intermediate biosynthesis; chorismate biosynthesis; chorismate from D-erythrose 4-phosphate and phosphoenolpyruvate: step 5/7. Functionally, catalyzes the specific phosphorylation of the 3-hydroxyl group of shikimic acid using ATP as a cosubstrate. This Gloeobacter violaceus (strain ATCC 29082 / PCC 7421) protein is Shikimate kinase.